We begin with the raw amino-acid sequence, 452 residues long: Bifunctional protein GlmU (452 aa).

The tract at residues 1 to 226 (MSLDIVILAA…AMEVQGANDR (226 aa)) is pyrophosphorylase. UDP-N-acetyl-alpha-D-glucosamine contacts are provided by residues 8-11 (LAAG), Lys22, Gln73, 78-79 (GT), 99-101 (YGD), Gly136, Glu151, Asn166, and Asn224. Asp101 is a Mg(2+) binding site. Position 224 (Asn224) interacts with Mg(2+). Positions 227-247 (IQLAELERHYQLRAARRLMAQ) are linker. The N-acetyltransferase stretch occupies residues 248-452 (GVTLRDPARF…IDGWQRPTKK (205 aa)). Residues Arg330 and Lys348 each contribute to the UDP-N-acetyl-alpha-D-glucosamine site. His360 (proton acceptor) is an active-site residue. 2 residues coordinate UDP-N-acetyl-alpha-D-glucosamine: Tyr363 and Asn374. Residues Ala377, 383–384 (NY), Ser402, Ala420, and Arg437 each bind acetyl-CoA.

It in the N-terminal section; belongs to the N-acetylglucosamine-1-phosphate uridyltransferase family. The protein in the C-terminal section; belongs to the transferase hexapeptide repeat family. Homotrimer. Mg(2+) serves as cofactor.

Its subcellular location is the cytoplasm. The enzyme catalyses alpha-D-glucosamine 1-phosphate + acetyl-CoA = N-acetyl-alpha-D-glucosamine 1-phosphate + CoA + H(+). The catalysed reaction is N-acetyl-alpha-D-glucosamine 1-phosphate + UTP + H(+) = UDP-N-acetyl-alpha-D-glucosamine + diphosphate. It functions in the pathway nucleotide-sugar biosynthesis; UDP-N-acetyl-alpha-D-glucosamine biosynthesis; N-acetyl-alpha-D-glucosamine 1-phosphate from alpha-D-glucosamine 6-phosphate (route II): step 2/2. Its pathway is nucleotide-sugar biosynthesis; UDP-N-acetyl-alpha-D-glucosamine biosynthesis; UDP-N-acetyl-alpha-D-glucosamine from N-acetyl-alpha-D-glucosamine 1-phosphate: step 1/1. The protein operates within bacterial outer membrane biogenesis; LPS lipid A biosynthesis. Functionally, catalyzes the last two sequential reactions in the de novo biosynthetic pathway for UDP-N-acetylglucosamine (UDP-GlcNAc). The C-terminal domain catalyzes the transfer of acetyl group from acetyl coenzyme A to glucosamine-1-phosphate (GlcN-1-P) to produce N-acetylglucosamine-1-phosphate (GlcNAc-1-P), which is converted into UDP-GlcNAc by the transfer of uridine 5-monophosphate (from uridine 5-triphosphate), a reaction catalyzed by the N-terminal domain. The sequence is that of Bifunctional protein GlmU from Stutzerimonas stutzeri (strain A1501) (Pseudomonas stutzeri).